A 365-amino-acid chain; its full sequence is tRNA 2-selenouridine synthase (365 aa).

A Rhodanese domain is found at 16–138; that stretch reads FLLKTPLIDL…LRRYLINVID (123 aa). The S-selanylcysteine intermediate role is filled by Cys-98.

This sequence belongs to the SelU family. Monomer.

The enzyme catalyses 5-methylaminomethyl-2-thiouridine(34) in tRNA + selenophosphate + (2E)-geranyl diphosphate + H2O + H(+) = 5-methylaminomethyl-2-selenouridine(34) in tRNA + (2E)-thiogeraniol + phosphate + diphosphate. The catalysed reaction is 5-methylaminomethyl-2-thiouridine(34) in tRNA + (2E)-geranyl diphosphate = 5-methylaminomethyl-S-(2E)-geranyl-thiouridine(34) in tRNA + diphosphate. It catalyses the reaction 5-methylaminomethyl-S-(2E)-geranyl-thiouridine(34) in tRNA + selenophosphate + H(+) = 5-methylaminomethyl-2-(Se-phospho)selenouridine(34) in tRNA + (2E)-thiogeraniol. It carries out the reaction 5-methylaminomethyl-2-(Se-phospho)selenouridine(34) in tRNA + H2O = 5-methylaminomethyl-2-selenouridine(34) in tRNA + phosphate. Its function is as follows. Involved in the post-transcriptional modification of the uridine at the wobble position (U34) of tRNA(Lys), tRNA(Glu) and tRNA(Gln). Catalyzes the conversion of 2-thiouridine (S2U-RNA) to 2-selenouridine (Se2U-RNA). Acts in a two-step process involving geranylation of 2-thiouridine (S2U) to S-geranyl-2-thiouridine (geS2U) and subsequent selenation of the latter derivative to 2-selenouridine (Se2U) in the tRNA chain. This Psychromonas ingrahamii (strain DSM 17664 / CCUG 51855 / 37) protein is tRNA 2-selenouridine synthase.